Here is a 623-residue protein sequence, read N- to C-terminus: Chaperone protein DnaK (623 aa).

A Phosphothreonine; by autocatalysis modification is found at T175. The interval 580 to 623 (PEGAQGAGFDPNNMGGANAGNASAGNDKKDDNVVDADFKVEDDK) is disordered. Low complexity predominate over residues 591-604 (NNMGGANAGNASAG). The segment covering 605–623 (NDKKDDNVVDADFKVEDDK) has biased composition (basic and acidic residues).

This sequence belongs to the heat shock protein 70 family.

Its function is as follows. Acts as a chaperone. The polypeptide is Chaperone protein DnaK (Clostridium botulinum (strain Hall / ATCC 3502 / NCTC 13319 / Type A)).